The chain runs to 830 residues: Leucine--tRNA ligase (830 aa).

The short motif at 34–44 (PYPSGNIHMGH) is the 'HIGH' region element. The 'KMSKS' region signature appears at 592–596 (KMSKS). Lys-595 serves as a coordination point for ATP.

The protein belongs to the class-I aminoacyl-tRNA synthetase family.

The protein localises to the cytoplasm. The enzyme catalyses tRNA(Leu) + L-leucine + ATP = L-leucyl-tRNA(Leu) + AMP + diphosphate. This Ehrlichia ruminantium (strain Gardel) protein is Leucine--tRNA ligase.